The primary structure comprises 114 residues: Large ribosomal subunit protein bL20c (114 aa).

Belongs to the bacterial ribosomal protein bL20 family.

The protein localises to the plastid. Its subcellular location is the chloroplast. Its function is as follows. Binds directly to 23S ribosomal RNA and is necessary for the in vitro assembly process of the 50S ribosomal subunit. It is not involved in the protein synthesizing functions of that subunit. The protein is Large ribosomal subunit protein bL20c (rpl20) of Guillardia theta (Cryptophyte).